We begin with the raw amino-acid sequence, 277 residues long: Shikimate dehydrogenase (NADP(+)) (277 aa).

Shikimate contacts are provided by residues 15–17 (SLS) and T62. Residue K66 is the Proton acceptor of the active site. 2 residues coordinate shikimate: N87 and D102. NADP(+) contacts are provided by residues 127–131 (GAGGA) and I219. Y221 contacts shikimate. Residue G242 coordinates NADP(+).

Belongs to the shikimate dehydrogenase family. As to quaternary structure, homodimer.

It catalyses the reaction shikimate + NADP(+) = 3-dehydroshikimate + NADPH + H(+). It functions in the pathway metabolic intermediate biosynthesis; chorismate biosynthesis; chorismate from D-erythrose 4-phosphate and phosphoenolpyruvate: step 4/7. In terms of biological role, involved in the biosynthesis of the chorismate, which leads to the biosynthesis of aromatic amino acids. Catalyzes the reversible NADPH linked reduction of 3-dehydroshikimate (DHSA) to yield shikimate (SA). This Bacillus cytotoxicus (strain DSM 22905 / CIP 110041 / 391-98 / NVH 391-98) protein is Shikimate dehydrogenase (NADP(+)).